The chain runs to 306 residues: Lipoyl synthase 2 (306 aa).

Residues Cys-49, Cys-54, Cys-60, Cys-75, Cys-79, Cys-82, and Ser-300 each contribute to the [4Fe-4S] cluster site. The region spanning 61-289 is the Radical SAM core domain; the sequence is YAAGTATFLL…AEVACKLGFA (229 aa).

It belongs to the radical SAM superfamily. Lipoyl synthase family. The cofactor is [4Fe-4S] cluster.

The protein localises to the cytoplasm. It carries out the reaction [[Fe-S] cluster scaffold protein carrying a second [4Fe-4S](2+) cluster] + N(6)-octanoyl-L-lysyl-[protein] + 2 oxidized [2Fe-2S]-[ferredoxin] + 2 S-adenosyl-L-methionine + 4 H(+) = [[Fe-S] cluster scaffold protein] + N(6)-[(R)-dihydrolipoyl]-L-lysyl-[protein] + 4 Fe(3+) + 2 hydrogen sulfide + 2 5'-deoxyadenosine + 2 L-methionine + 2 reduced [2Fe-2S]-[ferredoxin]. It functions in the pathway protein modification; protein lipoylation via endogenous pathway; protein N(6)-(lipoyl)lysine from octanoyl-[acyl-carrier-protein]: step 2/2. Catalyzes the radical-mediated insertion of two sulfur atoms into the C-6 and C-8 positions of the octanoyl moiety bound to the lipoyl domains of lipoate-dependent enzymes, thereby converting the octanoylated domains into lipoylated derivatives. This chain is Lipoyl synthase 2, found in Prochlorococcus marinus (strain MIT 9313).